The primary structure comprises 267 residues: Tryptophan synthase alpha chain (267 aa).

Catalysis depends on proton acceptor residues Glu-49 and Asp-60.

Belongs to the TrpA family. Tetramer of two alpha and two beta chains.

The catalysed reaction is (1S,2R)-1-C-(indol-3-yl)glycerol 3-phosphate + L-serine = D-glyceraldehyde 3-phosphate + L-tryptophan + H2O. It participates in amino-acid biosynthesis; L-tryptophan biosynthesis; L-tryptophan from chorismate: step 5/5. Its function is as follows. The alpha subunit is responsible for the aldol cleavage of indoleglycerol phosphate to indole and glyceraldehyde 3-phosphate. The sequence is that of Tryptophan synthase alpha chain from Cyanothece sp. (strain PCC 7425 / ATCC 29141).